The following is a 596-amino-acid chain: tRNA(Met) cytidine acetyltransferase TmcA (596 aa).

Residues Gln-138, 160–169 (GRGKSTLAGK), and Arg-285 each bind ATP. In terms of domain architecture, N-acetyltransferase spans 328–481 (SDLRRLFDAQ…SGYHSAMMLY (154 aa)). Residues 406 to 408 (IAV) and 413 to 419 (QKQGIGK) contribute to the acetyl-CoA site.

This sequence belongs to the RNA cytidine acetyltransferase family. TmcA subfamily.

The protein localises to the cytoplasm. It carries out the reaction cytidine(34) in elongator tRNA(Met) + acetyl-CoA + ATP + H2O = N(4)-acetylcytidine(34) in elongator tRNA(Met) + ADP + phosphate + CoA + H(+). Its function is as follows. Catalyzes the formation of N(4)-acetylcytidine (ac(4)C) at the wobble position of tRNA(Met), by using acetyl-CoA as an acetyl donor and ATP (or GTP). The polypeptide is tRNA(Met) cytidine acetyltransferase TmcA (Actinobacillus pleuropneumoniae serotype 5b (strain L20)).